The following is an 801-amino-acid chain: Mitochondrial intermediate peptidase (801 aa).

A mitochondrion-targeting transit peptide spans 1–41 (MKDQLLVPLRRRPWTCQKCLQRLQLPRHQTRRSFETAASPF). His564 is a Zn(2+) binding site. Residue Glu565 is part of the active site. Residues His568 and His571 each coordinate Zn(2+).

This sequence belongs to the peptidase M3 family. The cofactor is Zn(2+).

Its subcellular location is the mitochondrion matrix. The enzyme catalyses Release of an N-terminal octapeptide as second stage of processing of some proteins imported into the mitochondrion.. In terms of biological role, cleaves proteins, imported into the mitochondrion, to their mature size. While most mitochondrial precursor proteins are processed to the mature form in one step by mitochondrial processing peptidase (MPP), the sequential cleavage by MIP of an octapeptide after initial processing by MPP is a required step for a subgroup of nuclear-encoded precursor proteins destined for the matrix or the inner membrane. This is Mitochondrial intermediate peptidase (oct1) from Aspergillus fumigatus (strain ATCC MYA-4609 / CBS 101355 / FGSC A1100 / Af293) (Neosartorya fumigata).